A 450-amino-acid polypeptide reads, in one-letter code: Acyltransferase GLAUCE (450 aa).

Residues H171 and E394 each act as proton acceptor in the active site.

This sequence belongs to the plant acyltransferase family. Restricted to the central cells of embryo sacs.

It localises to the cytoplasm. The protein resides in the nucleus. Functionally, required for double fertilization of the egg cell and the central cell by two sperm cells, resulting in the formation of the embryo and the endosperm. Involved in the regulation of embryonic expression of PHE1. Essential in maternal tissues to ensure the paternal embryonic expression of several genes, including RPS5a and FAC1, both of which being essential for early embryo and endosperm development in fertilized seeds. This chain is Acyltransferase GLAUCE, found in Arabidopsis thaliana (Mouse-ear cress).